The following is a 629-amino-acid chain: tRNA uridine 5-carboxymethylaminomethyl modification enzyme MnmG (629 aa).

FAD is bound by residues 13-18, V125, and S180; that span reads GGGHAG. An NAD(+)-binding site is contributed by 273 to 287; it reads GPRYCPSIEDKVMRF. Q370 is an FAD binding site.

The protein belongs to the MnmG family. As to quaternary structure, homodimer. Heterotetramer of two MnmE and two MnmG subunits. The cofactor is FAD.

The protein resides in the cytoplasm. Functionally, NAD-binding protein involved in the addition of a carboxymethylaminomethyl (cmnm) group at the wobble position (U34) of certain tRNAs, forming tRNA-cmnm(5)s(2)U34. In Serratia proteamaculans (strain 568), this protein is tRNA uridine 5-carboxymethylaminomethyl modification enzyme MnmG.